Here is a 216-residue protein sequence, read N- to C-terminus: Adenylate kinase (216 aa).

An ATP-binding site is contributed by 11–16 (GSGKGT). The NMP stretch occupies residues 31-60 (ATGDLFRKAIECGDELGDTVKSYMERGELV). Residues threonine 32, arginine 37, 58 to 60 (ELV), 86 to 89 (GFPR), and glutamine 93 each bind AMP. Residues 127–163 (GRWVCRSCQSPYQSGCAEVTKGKCSRCQGGLYQRPDD) are LID. Arginine 128 is an ATP binding site. Positions 131, 134, 150, and 153 each coordinate Zn(2+). Residues arginine 160 and arginine 171 each contribute to the AMP site. ATP is bound at residue alanine 199.

The protein belongs to the adenylate kinase family. In terms of assembly, monomer.

The protein resides in the cytoplasm. It carries out the reaction AMP + ATP = 2 ADP. It functions in the pathway purine metabolism; AMP biosynthesis via salvage pathway; AMP from ADP: step 1/1. In terms of biological role, catalyzes the reversible transfer of the terminal phosphate group between ATP and AMP. Plays an important role in cellular energy homeostasis and in adenine nucleotide metabolism. The chain is Adenylate kinase from Dehalococcoides mccartyi (strain CBDB1).